Consider the following 311-residue polypeptide: Ribosomal protein L11 methyltransferase (311 aa).

4 residues coordinate S-adenosyl-L-methionine: Thr-163, Gly-184, Asp-206, and Asn-248.

This sequence belongs to the methyltransferase superfamily. PrmA family.

It localises to the cytoplasm. It catalyses the reaction L-lysyl-[protein] + 3 S-adenosyl-L-methionine = N(6),N(6),N(6)-trimethyl-L-lysyl-[protein] + 3 S-adenosyl-L-homocysteine + 3 H(+). In terms of biological role, methylates ribosomal protein L11. In Clostridium acetobutylicum (strain ATCC 824 / DSM 792 / JCM 1419 / IAM 19013 / LMG 5710 / NBRC 13948 / NRRL B-527 / VKM B-1787 / 2291 / W), this protein is Ribosomal protein L11 methyltransferase.